Consider the following 1201-residue polypeptide: MSLQFILGSAGQDHRTPMVTALAQQVTAHPTDQSYYLVPNHIKFETEVDVLSALKEQIAPEQALFAQTQVQVFSFTRLAWFFMKNEPIYQLPRISPAGLNMLIYQIIQTHADELTIFRGEVDRPGFVSQLATQLAEFKVGQVTAADLMSAIEQLDTTNTDLQAKLHDLMIIYEAFETQMMGKFVENTDLLNQLATYLEQQVDLQHAHFYLEGFSQLSAQERQLVAILIQRSASVTVALNLDHGYPQKLPDKTTLFFQSAKLYQQLYMVAQANRVPVLIDQQAKTARVSADLQALDTYWQASQTLSPQPSAVEKPTHIQIVQAANRYVEVSRVATQIRQLVATGNYRYRDFLVLTRHLDAYQTVIDPIFQAQAVPYFDDADIRMADHPFVELLNALFDVQRRNYRYADVFRVLKSELLLPRDADGELMAVPAYRQALALTENFVLKNGLEGQHWWTQDKDWVYNRFAVGDGGVQTTRDDQISAQINRIRRFVKQTLPPFFARLKVAATYTDAAAVLYQFVANAGVSERLMTWRDQAIAAGDLTKAGQPEQTWAAFCDILDEFHTILGDLPTVLPDFQALLQAGFAGAKFSQIPSTLDQVVISESGIVQANNRKITFIMGATADTMPDNQIPTTLLADNDRQDLSARLQQVDDGTYLRDDAATQLAGEPYLNYLAFMSGSERLIFSYPAMSDDARSGLQLSPYVARIKDYFGLSIDIAAANPVAEDEAILPFVGTRRTTLRHLVQASHDSQLREVPLSRSWLYVLNLLRTDPTYGELTTKLLGSLSYRNVPTQLTPDIVTQLYGTKINTSISKLEEYYANPYAYFLKYGLNLQERDVFALSPASTGEFFHATLDGLMKLVNDQKLNLAALDDQQLREMTDEVMAKLLDTTENPQFAILESSHRMGYIRQQLMKTMRQMAKTLQEQSKRTKLRPKRTEVQFGLGDERGLAALSFDVGKRRQVTVRGRIDRLDAVQVKDKTYLGIVDYKSSEHKFSYQEAYYGRAMQMLTYLDAVKQNLPTLLDAPTAKDAELAGAVYLHLQNPILKAAEVLGEDPLTSLLKAEQYQGLLLDDPDLLTNLDTLFGTPDYSGSSLLFRGLRRTKTGKITSYGKLLVNSNELDLLLTHTERLIKRAATDIFDGRVDLAPFREQNRTALQYSPYKSVMQFDPLLKENNYRDLPSLNKDDVMARIAAEQEQEATDEHEI.

Belongs to the helicase family. AddB/RexB type 2 subfamily. Heterodimer of AddA and RexB. Mg(2+) is required as a cofactor.

Its function is as follows. The heterodimer acts as both an ATP-dependent DNA helicase and an ATP-dependent, dual-direction single-stranded exonuclease. Recognizes the chi site generating a DNA molecule suitable for the initiation of homologous recombination. This subunit has 5' -&gt; 3' nuclease activity but not helicase activity. The polypeptide is ATP-dependent helicase/deoxyribonuclease subunit B (Levilactobacillus brevis (strain ATCC 367 / BCRC 12310 / CIP 105137 / JCM 1170 / LMG 11437 / NCIMB 947 / NCTC 947) (Lactobacillus brevis)).